Reading from the N-terminus, the 239-residue chain is Pimeloyl-[acyl-carrier protein] methyl ester esterase (239 aa).

Residues W20, 77–78 (SM), and 138–142 (FISLQ) contribute to the substrate site. Residue S77 is the Nucleophile of the active site. Active-site residues include D192 and H220. H220 contributes to the substrate binding site.

This sequence belongs to the AB hydrolase superfamily. Carboxylesterase BioH family. In terms of assembly, monomer.

It is found in the cytoplasm. The catalysed reaction is 6-carboxyhexanoyl-[ACP] methyl ester + H2O = 6-carboxyhexanoyl-[ACP] + methanol + H(+). It functions in the pathway cofactor biosynthesis; biotin biosynthesis. Its function is as follows. The physiological role of BioH is to remove the methyl group introduced by BioC when the pimeloyl moiety is complete. It allows to synthesize pimeloyl-ACP via the fatty acid synthetic pathway through the hydrolysis of the ester bonds of pimeloyl-ACP esters. This chain is Pimeloyl-[acyl-carrier protein] methyl ester esterase, found in Legionella pneumophila (strain Lens).